A 128-amino-acid polypeptide reads, in one-letter code: Cytochrome c-type biogenesis protein CcmE (128 aa).

The Cytoplasmic portion of the chain corresponds to 1–8; sequence MQKRVRNR. The helical; Signal-anchor for type II membrane protein transmembrane segment at 9 to 29 threads the bilayer; it reads LITIIICFCSAFLGISIILYN. At 30–128 the chain is on the periplasmic side; it reads LEKNIVFFLP…KHDENYRPPQ (99 aa). Positions 120 and 124 each coordinate heme.

It belongs to the CcmE/CycJ family.

It is found in the cell inner membrane. In terms of biological role, heme chaperone required for the biogenesis of c-type cytochromes. Transiently binds heme delivered by CcmC and transfers the heme to apo-cytochromes in a process facilitated by CcmF and CcmH. The chain is Cytochrome c-type biogenesis protein CcmE from Rickettsia rickettsii (strain Iowa).